The following is a 176-amino-acid chain: Dual-action ribosomal maturation protein DarP (176 aa).

The protein belongs to the DarP family.

It is found in the cytoplasm. In terms of biological role, member of a network of 50S ribosomal subunit biogenesis factors which assembles along the 30S-50S interface, preventing incorrect 23S rRNA structures from forming. Promotes peptidyl transferase center (PTC) maturation. The protein is Dual-action ribosomal maturation protein DarP of Aliivibrio fischeri (strain MJ11) (Vibrio fischeri).